The sequence spans 304 residues: Protease HtpX homolog (304 aa).

The next 2 membrane-spanning stretches (helical) occupy residues 14–34 and 39–59; these read VFIILGFFIFVLMVGAAIGII and YLNGLILAAAIGAVYILIMVM. Histidine 144 is a Zn(2+) binding site. Residue glutamate 145 is part of the active site. Position 148 (histidine 148) interacts with Zn(2+). The next 2 helical transmembrane spans lie at 159-179 and 202-222; these read IAIALVAVIAILSDLAMRLIF and IIIYVVALIFVILAPIIATAI. Glutamate 231 lines the Zn(2+) pocket. Residues 275-304 are disordered; the sequence is SSPLKSKKDKPGLFDSHPPISSRIERLENM.

Belongs to the peptidase M48B family. Zn(2+) is required as a cofactor.

It localises to the cell membrane. The protein is Protease HtpX homolog of Listeria innocua serovar 6a (strain ATCC BAA-680 / CLIP 11262).